The sequence spans 533 residues: Calcium uptake protein 1 homolog, mitochondrial (533 aa).

A mitochondrion-targeting transit peptide spans methionine 1 to arginine 13. The tract at residues proline 127–valine 147 is disordered. EF-hand domains lie at threonine 270–glutamine 305, lysine 337–aspartate 358, and leucine 465–arginine 500. 4 residues coordinate Ca(2+): aspartate 283, aspartate 285, asparagine 287, and glutamate 294.

This sequence belongs to the MICU1 family. MICU1 subfamily.

It localises to the mitochondrion intermembrane space. The protein localises to the mitochondrion inner membrane. In terms of biological role, calcium sensor of the mitochondrial calcium uniporter (mcu-1) channel, which senses calcium level via its EF-hand domains. At low calcium levels, micu-1 occludes the pore of the mcu-1 channel, preventing mitochondrial calcium uptake. At higher calcium levels, calcium-binding to micu-1 induces a conformational change that weakens mcu-1-micu-1 interactions and moves micu-1 away from the pore, allowing calcium permeation through the mcu-1 channel. Also required to protect against manganese toxicity by preventing manganese uptake by mcu-1. Modulates the activity of the mitochondrial calcium uniporter protein mcu-1 depending on the level of intracellular calcium in PLM touch receptor neurons following axonal injury. The polypeptide is Calcium uptake protein 1 homolog, mitochondrial (Caenorhabditis briggsae).